Reading from the N-terminus, the 105-residue chain is Large ribosomal subunit protein bL21 (105 aa).

The protein belongs to the bacterial ribosomal protein bL21 family. As to quaternary structure, part of the 50S ribosomal subunit. Contacts protein L20.

Functionally, this protein binds to 23S rRNA in the presence of protein L20. This is Large ribosomal subunit protein bL21 from Dictyoglomus thermophilum (strain ATCC 35947 / DSM 3960 / H-6-12).